Consider the following 29-residue polypeptide: Dermaseptin-1 (29 aa).

Position 29 is a valine amide (Val29).

As to expression, expressed by the skin glands.

The protein resides in the secreted. Functionally, antimicrobial peptide, active against the Gram-positive bacterium S.aureus, the Gram-negative bacteria E.coli and P.aeruginosa, and the yeasts C.albicans and P.brasiliensis. Has hemolytic activity (40% hemolysis at 128 ug/ml). This chain is Dermaseptin-1, found in Phyllomedusa tarsius (Brownbelly leaf frog).